The following is a 162-amino-acid chain: Transcription elongation factor GreA (162 aa).

A coiled-coil region spans residues 44–72 (ENAEYHAAKEKQSHIERRIAELSDILSRA).

The protein belongs to the GreA/GreB family.

Its function is as follows. Necessary for efficient RNA polymerase transcription elongation past template-encoded arresting sites. The arresting sites in DNA have the property of trapping a certain fraction of elongating RNA polymerases that pass through, resulting in locked ternary complexes. Cleavage of the nascent transcript by cleavage factors such as GreA or GreB allows the resumption of elongation from the new 3'terminus. GreA releases sequences of 2 to 3 nucleotides. This Nautilia profundicola (strain ATCC BAA-1463 / DSM 18972 / AmH) protein is Transcription elongation factor GreA.